Here is a 533-residue protein sequence, read N- to C-terminus: Tryptophan 7-halogenase KtzQ (533 aa).

Positions 14, 16, 17, 40, 50, and 51 each coordinate FAD. Lys-80 is a catalytic residue. Residue Glu-359 coordinates L-tryptophan. Residues Thr-361 and Gly-362 each contribute to the chloride site. Leu-363 serves as a coordination point for FAD. L-tryptophan is bound by residues Tyr-456, Tyr-457, Glu-463, and Phe-467.

It belongs to the flavin-dependent halogenase family. Bacterial tryptophan halogenase subfamily.

The catalysed reaction is L-tryptophan + FADH2 + chloride + O2 = 7-chloro-L-tryptophan + FAD + 2 H2O. Functionally, involved in the biosynthesis of kutznerides, actinomycete-derived antifungal and antimicrobial cyclic hexadepsipeptides. Together with KtzR, catalyzes the regiospecific dichlorination of L-tryptophan (L-Trp) to produce 6,7-dichloro-L-tryptophan. KtzQ catalyzes the chlorination of L-Trp at C7 position to yield 7-chlorotryptophan. Can also use 6-chloro-L-tryptophan as substrate and form 6,7-dichloro-L-tryptophan, but has a preference for halogenation at the 7 position of unmodified L-Trp. Cannot use piperazic acid or gamma,delta-dehydropiperazic acid. The polypeptide is Tryptophan 7-halogenase KtzQ (Kutzneria sp. (strain 744)).